Here is a 348-residue protein sequence, read N- to C-terminus: NADH-cytochrome b5 reductase 2 (348 aa).

A helical transmembrane segment spans residues 41-61 (TLLYGAAAAAVAGAGYYFLGG). Positions 97-202 (QGWVSLKLEE…KGPLPKYPWT (106 aa)) constitute an FAD-binding FR-type domain. 205–240 (KHGHIALVAGGTGITPMFQLCRAIFNNPDDQTKVTL) lines the FAD pocket.

The protein belongs to the flavoprotein pyridine nucleotide cytochrome reductase family. It depends on FAD as a cofactor.

Its subcellular location is the mitochondrion outer membrane. It carries out the reaction 2 Fe(III)-[cytochrome b5] + NADH = 2 Fe(II)-[cytochrome b5] + NAD(+) + H(+). Its function is as follows. May mediate the reduction of outer membrane cytochrome b5. In Chaetomium globosum (strain ATCC 6205 / CBS 148.51 / DSM 1962 / NBRC 6347 / NRRL 1970) (Soil fungus), this protein is NADH-cytochrome b5 reductase 2 (MCR1).